The following is an 848-amino-acid chain: DIS3-like exonuclease 2 (848 aa).

A disordered region spans residues lysine 153–cysteine 173. 2 residues coordinate Mg(2+): aspartate 345 and aspartate 354.

Belongs to the RNR ribonuclease family. DIS3L2 subfamily. Mg(2+) serves as cofactor. The cofactor is Mn(2+). Post-translationally, cleaved by caspase ced-3 in vitro.

The protein resides in the cytoplasm. It localises to the P-body. 3'-5'-exoribonuclease that specifically recognizes RNAs polyuridylated at their 3' end and mediates their degradation. Component of an exosome-independent RNA degradation pathway that mediates degradation of cytoplasmic mRNAs that have been deadenylated and subsequently uridylated at their 3'. The sequence is that of DIS3-like exonuclease 2 from Caenorhabditis elegans.